We begin with the raw amino-acid sequence, 653 residues long: PAN2-PAN3 deadenylation complex subunit PAN3 (653 aa).

Disordered regions lie at residues 1–21 (MASD…ENAK) and 45–128 (HDPN…AAPD). A C3H1-type zinc finger spans residues 19–48 (NAKDTLCRNVTIYGRCRYEDKGCVYNHDPN). Positions 68–95 (SFTPSLLSSNGSSPTSSSATLKKTTTIS) are enriched in low complexity. The span at 108-119 (GISSRSNASTPS) shows a compositional bias: polar residues. The pseudokinase domain stretch occupies residues 256–516 (QTLPNTQLPA…TIDIFITGIS (261 aa)). Residues R308, 357-364 (DYHPLSKT), and 416-417 (SK) each bind ATP. The stretch at 517–555 (SQLMSTFDSALHMDDQLTSDLSRELENGRLVRLMTKLNF) forms a coiled coil. Residues 556–653 (INERPEYEHD…ALLKPTRRVH (98 aa)) are knob domain.

This sequence belongs to the protein kinase superfamily. PAN3 family. As to quaternary structure, homodimer. Forms a heterotrimer with a catalytic subunit pan2 to form the poly(A)-nuclease (PAN) deadenylation complex. Interacts (via PAM-2 motif) with poly(A)-binding protein pab1 (via PABC domain), conferring substrate specificity of the enzyme complex.

Its subcellular location is the cytoplasm. Regulatory subunit of the poly(A)-nuclease (PAN) deadenylation complex, one of two cytoplasmic mRNA deadenylases involved in mRNA turnover. PAN specifically shortens poly(A) tails of RNA and the activity is stimulated by poly(A)-binding protein pab1. PAN deadenylation is followed by rapid degradation of the shortened mRNA tails by the CCR4-NOT complex. Deadenylated mRNAs are then degraded by two alternative mechanisms, namely exosome-mediated 3'-5' exonucleolytic degradation, or deadenylation-dependent mRNA decaping and subsequent 5'-3' exonucleolytic degradation by xrn1. May also be involved in post-transcriptional maturation of mRNA poly(A) tails. pan3 acts as a positive regulator for PAN activity, recruiting the catalytic subunit pan2 to mRNA via its interaction with RNA and with pab1. The protein is PAN2-PAN3 deadenylation complex subunit PAN3 of Aspergillus terreus (strain NIH 2624 / FGSC A1156).